Consider the following 109-residue polypeptide: MHGPRPTLQEIVLDLYPYNEIQPVDLVCHEQLEDSDNETDEPDHVVNHQQQLLARREEPQRHKIQCMCCKCNTTLHLVVEASQENLRSLLQLFMETLSFVCPWCASGTQ.

The E7 terminal domain stretch occupies residues 1–47; sequence MHGPRPTLQEIVLDLYPYNEIQPVDLVCHEQLEDSDNETDEPDHVVN. An LXCXE motif; interaction with host RB1 and TMEM173/STING motif is present at residues 26 to 30; the sequence is LVCHE. A zinc finger spans residues 68–104; it reads CCKCNTTLHLVVEASQENLRSLLQLFMETLSFVCPWC. Residues 86-94 carry the Nuclear export signal motif; that stretch reads LRSLLQLFM.

This sequence belongs to the papillomaviridae E7 protein family. Homodimer. Homooligomer. Interacts with host RB1; this interaction induces dissociation of RB1-E2F1 complex thereby disrupting RB1 activity. Interacts with host EP300; this interaction represses EP300 transcriptional activity. Interacts with protein E2; this interaction inhibits E7 oncogenic activity. Interacts with host TMEM173/STING; this interaction impairs the ability of TMEM173/STING to sense cytosolic DNA and promote the production of type I interferon (IFN-alpha and IFN-beta). In terms of processing, highly phosphorylated.

It localises to the host cytoplasm. The protein resides in the host nucleus. Plays a role in viral genome replication by driving entry of quiescent cells into the cell cycle. Stimulation of progression from G1 to S phase allows the virus to efficiently use the cellular DNA replicating machinery to achieve viral genome replication. E7 protein has both transforming and trans-activating activities. Induces the disassembly of the E2F1 transcription factor from RB1, with subsequent transcriptional activation of E2F1-regulated S-phase genes. Interferes with host histone deacetylation mediated by HDAC1 and HDAC2, leading to transcription activation. Also plays a role in the inhibition of both antiviral and antiproliferative functions of host interferon alpha. Interaction with host TMEM173/STING impairs the ability of TMEM173/STING to sense cytosolic DNA and promote the production of type I interferon (IFN-alpha and IFN-beta). The sequence is that of Protein E7 from Human papillomavirus type 70.